A 210-amino-acid polypeptide reads, in one-letter code: Na(+)-translocating NADH-quinone reductase subunit D (210 aa).

The next 6 membrane-spanning stretches (helical) occupy residues 14 to 34, 42 to 62, 72 to 92, 103 to 123, 131 to 151, and 178 to 198; these read PIVN…ALAV, LVMA…ISMI, IIVQ…LLQA, VFVG…AYAM, FMDG…VGFV, and NGLL…IWII.

Belongs to the NqrDE/RnfAE family. As to quaternary structure, composed of six subunits; NqrA, NqrB, NqrC, NqrD, NqrE and NqrF.

Its subcellular location is the cell inner membrane. It catalyses the reaction a ubiquinone + n Na(+)(in) + NADH + H(+) = a ubiquinol + n Na(+)(out) + NAD(+). Its function is as follows. NQR complex catalyzes the reduction of ubiquinone-1 to ubiquinol by two successive reactions, coupled with the transport of Na(+) ions from the cytoplasm to the periplasm. NqrA to NqrE are probably involved in the second step, the conversion of ubisemiquinone to ubiquinol. The protein is Na(+)-translocating NADH-quinone reductase subunit D of Shewanella oneidensis (strain ATCC 700550 / JCM 31522 / CIP 106686 / LMG 19005 / NCIMB 14063 / MR-1).